We begin with the raw amino-acid sequence, 152 residues long: Ribosome maturation factor RimP (152 aa).

It belongs to the RimP family.

It is found in the cytoplasm. Its function is as follows. Required for maturation of 30S ribosomal subunits. The chain is Ribosome maturation factor RimP from Shigella boydii serotype 4 (strain Sb227).